The primary structure comprises 184 residues: Copper transporter 6 (184 aa).

Over residues 1–25 the composition is skewed to low complexity; it reads MRGMGDDGMGPMAMAPPRSGHATAA. The segment at 1–27 is disordered; sequence MRGMGDDGMGPMAMAPPRSGHATAAAP. Transmembrane regions (helical) follow at residues 64-84 and 124-144; these read YALC…LSVL and MAYL…LAAV.

This sequence belongs to the copper transporter (Ctr) (TC 1.A.56) family. SLC31A subfamily.

It is found in the membrane. Its function is as follows. Involved in the transport of copper. The chain is Copper transporter 6 (COPT6) from Oryza sativa subsp. japonica (Rice).